The sequence spans 141 residues: ATP synthase epsilon chain (141 aa).

The protein belongs to the ATPase epsilon chain family. In terms of assembly, F-type ATPases have 2 components, CF(1) - the catalytic core - and CF(0) - the membrane proton channel. CF(1) has five subunits: alpha(3), beta(3), gamma(1), delta(1), epsilon(1). CF(0) has three main subunits: a, b and c.

It is found in the cell inner membrane. Its function is as follows. Produces ATP from ADP in the presence of a proton gradient across the membrane. The chain is ATP synthase epsilon chain from Dechloromonas aromatica (strain RCB).